Reading from the N-terminus, the 362-residue chain is UDP-galactose transporter homolog 1 (362 aa).

The next 5 membrane-spanning stretches (helical) occupy residues 7–27, 45–65, 111–131, 141–161, and 175–195; these read IFPV…WALV, CPNV…YFYM, LTYM…HLII, SVVA…GSKG, and FFQK…DGLT. N196 carries an N-linked (GlcNAc...) asparagine glycan. Transmembrane regions (helical) follow at residues 234 to 254, 271 to 291, 296 to 316, and 317 to 337; these read HMMF…LLVI, IIVS…CFIF, LYGS…SMLL, and SIIV…VIVF.

It belongs to the nucleotide-sugar transporter family. SLC35B subfamily.

It localises to the endoplasmic reticulum membrane. Its function is as follows. May be involved in specific transport of UDP-Gal from the cytosol to the Golgi lumen. Involved in the maintenance of optimal conditions for the folding of secretory pathway proteins in the endoplasmic reticulum. The protein is UDP-galactose transporter homolog 1 (HUT1) of Candida glabrata (strain ATCC 2001 / BCRC 20586 / JCM 3761 / NBRC 0622 / NRRL Y-65 / CBS 138) (Yeast).